A 245-amino-acid chain; its full sequence is 1-(5-phosphoribosyl)-5-[(5-phosphoribosylamino)methylideneamino] imidazole-4-carboxamide isomerase (245 aa).

Aspartate 7 (proton acceptor) is an active-site residue. The Proton donor role is filled by aspartate 129.

Belongs to the HisA/HisF family.

The protein resides in the cytoplasm. It carries out the reaction 1-(5-phospho-beta-D-ribosyl)-5-[(5-phospho-beta-D-ribosylamino)methylideneamino]imidazole-4-carboxamide = 5-[(5-phospho-1-deoxy-D-ribulos-1-ylimino)methylamino]-1-(5-phospho-beta-D-ribosyl)imidazole-4-carboxamide. Its pathway is amino-acid biosynthesis; L-histidine biosynthesis; L-histidine from 5-phospho-alpha-D-ribose 1-diphosphate: step 4/9. The polypeptide is 1-(5-phosphoribosyl)-5-[(5-phosphoribosylamino)methylideneamino] imidazole-4-carboxamide isomerase (Shewanella frigidimarina (strain NCIMB 400)).